The chain runs to 27 residues: Cationic protein C1 (27 aa).

It localises to the secreted. It is found in the nematocyst. This Bunodosoma caissarum (Sea anemone) protein is Cationic protein C1.